Here is a 338-residue protein sequence, read N- to C-terminus: Pseudouridylate synthase TRUB1 (338 aa).

Ala2 is subject to N-acetylalanine. The Nucleophile role is filled by Asp109.

Belongs to the pseudouridine synthase TruB family.

It is found in the nucleus. It localises to the cytoplasm. The protein resides in the cytosol. It carries out the reaction a uridine in mRNA = a pseudouridine in mRNA. The enzyme catalyses a uridine in tRNA = a pseudouridine in tRNA. It catalyses the reaction uridine(55) in tRNA = pseudouridine(55) in tRNA. Its function is as follows. Pseudouridine synthase that catalyzes pseudouridylation of mRNAs and tRNAs. Mediates pseudouridylation of mRNAs with the consensus sequence 5'-GUUCNANNC-3', harboring a stem-loop structure. Constitutes the major pseudouridine synthase acting on mRNAs. Also catalyzes pseudouridylation of some tRNAs, including synthesis of pseudouridine(55) from uracil-55, in the psi GC loop of a subset of tRNAs. Promotes the processing of pri-let-7 microRNAs (pri-miRNAs) independently of its RNA pseudouridylate synthase activity. Acts by binding to the stem-loop structure on pri-let-7, preventing LIN28-binding (LIN28A and/or LIN28B), thereby enhancing the interaction between pri-let-7 and the microprocessor DGCR8, which mediates miRNA maturation. The protein is Pseudouridylate synthase TRUB1 of Mus musculus (Mouse).